A 359-amino-acid polypeptide reads, in one-letter code: Heme A synthase (359 aa).

The next 6 membrane-spanning stretches (helical) occupy residues 23–43 (AVAFWLWSLAVLVFLMVVLGG), 85–105 (YAALFPDMDLAGFKFIFFFEW), 109–129 (LLGRLIGVATALPLLFFWLRG), 137–157 (LKLLGLLALGGLQGFVGWWMV), 172–192 (LAIHLILASLTFCFIVWLAAS), and 212–232 (AGLILLAILVQIGLGALVAGL). Heme is bound at residue histidine 276. Helical transmembrane passes span 278–298 (MVAYLVLGLTLLQVFWTSGTL), 308–328 (IALLGLVLAQVILGILTLVLV), and 329–349 (VPLWAGLLHQAFAMLVLGMAV). Residue histidine 337 participates in heme binding.

It belongs to the COX15/CtaA family. Type 2 subfamily. In terms of assembly, interacts with CtaB. It depends on heme b as a cofactor.

The protein localises to the cell membrane. It catalyses the reaction Fe(II)-heme o + 2 A + H2O = Fe(II)-heme a + 2 AH2. The protein operates within porphyrin-containing compound metabolism; heme A biosynthesis; heme A from heme O: step 1/1. Functionally, catalyzes the conversion of heme O to heme A by two successive hydroxylations of the methyl group at C8. The first hydroxylation forms heme I, the second hydroxylation results in an unstable dihydroxymethyl group, which spontaneously dehydrates, resulting in the formyl group of heme A. This is Heme A synthase from Beijerinckia indica subsp. indica (strain ATCC 9039 / DSM 1715 / NCIMB 8712).